The chain runs to 269 residues: Phosphate import ATP-binding protein PstB (269 aa).

The ABC transporter domain occupies 14–253 (LTLEDVSISY…EFDSTKKIFS (240 aa)). Residue 46-53 (GPSGCGKS) coordinates ATP.

Belongs to the ABC transporter superfamily. Phosphate importer (TC 3.A.1.7) family. As to quaternary structure, the complex is composed of two ATP-binding proteins (PstB), two transmembrane proteins (PstC and PstA) and a solute-binding protein (PstS).

The protein localises to the cell inner membrane. It carries out the reaction phosphate(out) + ATP + H2O = ADP + 2 phosphate(in) + H(+). In terms of biological role, part of the ABC transporter complex PstSACB involved in phosphate import. Responsible for energy coupling to the transport system. The sequence is that of Phosphate import ATP-binding protein PstB from Prochlorococcus marinus subsp. pastoris (strain CCMP1986 / NIES-2087 / MED4).